We begin with the raw amino-acid sequence, 369 residues long: Cellular tumor antigen p53 (369 aa).

A transcription activation (acidic) region spans residues 1-28 (MAESQEFAELWERNLISTQEAGTCWELI). The DNA-binding element occupies 66 to 256 (DYPGEHGFKL…KTEESNFRKD (191 aa)). Zn(2+) contacts are provided by Cys140, His143, Cys202, and Cys206. The interval 237–244 (RVCACPGR) is interaction with DNA. Residues 246–263 (RKTEESNFRKDQETKTLD) show a composition bias toward basic and acidic residues. Disordered regions lie at residues 246–296 (RKTE…SGSS) and 318–369 (NDSL…SDSD). The span at 269 to 281 (NKRSLTKDSTSSV) shows a compositional bias: polar residues. The Bipartite nuclear localization signal signature appears at 270 to 289 (KRSLTKDSTSSVPRPEGSKK). The interval 298-329 (EEIYTLQVRGKERYEMLKKINDSLELSDVVPP) is oligomerization. The Nuclear export signal motif lies at 312 to 323 (EMLKKINDSLEL). The interval 342 to 365 (KGKKKDGQTPEPKRGKKLMVKDEK) is basic (repression of DNA-binding). The span at 346–369 (KDGQTPEPKRGKKLMVKDEKSDSD) shows a compositional bias: basic and acidic residues.

This sequence belongs to the p53 family. As to quaternary structure, binds DNA as a homotetramer. Requires Zn(2+) as cofactor.

Its subcellular location is the cytoplasm. It localises to the nucleus. Functionally, multifunctional transcription factor that induces cell cycle arrest, DNA repair or apoptosis upon binding to its target DNA sequence. Acts as a tumor suppressor in many tumor types; induces growth arrest or apoptosis depending on the physiological circumstances and cell type. Negatively regulates cell division by controlling expression of a set of genes required for this process. One of the activated genes is an inhibitor of cyclin-dependent kinases. Apoptosis induction seems to be mediated either by stimulation of BAX and FAS antigen expression, or by repression of Bcl-2 expression. The chain is Cellular tumor antigen p53 (tp53) from Barbus barbus (Barbel).